A 412-amino-acid chain; its full sequence is Homoserine dehydrogenase (412 aa).

NADP(+) contacts are provided by residues 9-16 (LGIGTVGG) and K105. Residue E190 participates in substrate binding. Residue K205 is the Proton donor of the active site. Residues 330–407 (YLRLRAVDKP…ISGKVTRLRM (78 aa)) enclose the ACT domain.

Belongs to the homoserine dehydrogenase family.

It catalyses the reaction L-homoserine + NADP(+) = L-aspartate 4-semialdehyde + NADPH + H(+). It carries out the reaction L-homoserine + NAD(+) = L-aspartate 4-semialdehyde + NADH + H(+). It functions in the pathway amino-acid biosynthesis; L-methionine biosynthesis via de novo pathway; L-homoserine from L-aspartate: step 3/3. The protein operates within amino-acid biosynthesis; L-threonine biosynthesis; L-threonine from L-aspartate: step 3/5. This chain is Homoserine dehydrogenase (hom), found in Methylobacillus glycogenes.